Consider the following 1489-residue polypeptide: Sex-determining transformer protein 2 (1489 aa).

The N-terminal stretch at 1 to 33 (MKLAFNKLLVASVVFTVLSFGLLLASLFTTTAT) is a signal peptide. The next 11 helical transmembrane spans lie at 454-474 (MIYFILGACALMVALFAAFAF), 489-509 (GFITGLLFIFLCKSGGLILID), 513-533 (LCYITMHLAFNLVMTARVTFI), 600-620 (YWFLIAIVLVPVIGVYWFFID), 622-642 (DVQKICIVLLPAFLIAAFEEM), 749-769 (AVVVSSVAALLILLSIGLLFI), 931-951 (IFAAAVLAGFFSIIVVFFSIG), 958-978 (LAFAFFVVGNRLEIAAIVSLF), 986-1006 (YTNVAVFVGFLAAWTPFCDLA), 1041-1061 (VQIFAIFLTATILLIVITAII), and 1066-1086 (AFFIPTVILLITLLLAVFNSL). Positions 1138 to 1288 (EFSIRPTENT…EQQEVTDDVA (151 aa)) are interaction with fem-3. Disordered regions lie at residues 1143 to 1176 (PTENTKHYAPRPIDNSDPPEQAADEEVVNQDPSM), 1233 to 1393 (LLRQ…YPPS), and 1412 to 1489 (RNLP…TPGL). 3 stretches are compositionally biased toward basic and acidic residues: residues 1275–1298 (DPAKEQQEVTDDVATRYKEEEVRK), 1326–1340 (VSREAPEDSPNREPR), and 1423–1433 (RPRDWDQRRLV). The segment at 1402 to 1423 (CEDVYWKYNERNLPDNVPMPPR) is MX regulatory domain; required for tra-1 binding. Positions 1444-1456 (VPPPGRSAIPIPP) are enriched in pro residues. The span at 1460–1482 (RLRERRREQHLREQEARRNRPES) shows a compositional bias: basic and acidic residues.

Interacts with tra-1 and fem-3.

It localises to the membrane. Functionally, plays a major role in controlling sexual cell fates. Promotes female development in XX animals where it sequesters one or more of the FEM proteins to the membrane thereby freeing the tra-1 protein (a putative transcription factor) to enter the nucleus and promote female development. In XO animals it acts as a receptor for her-1 which prevents it from binding to FEM proteins thereby repressing the activity of tra-1. Negatively regulates male development when bound to fem-3 and is required together with tra-1 for promoting spermatogenesis. Also required for feminizing tra-3 activity. The sequence is that of Sex-determining transformer protein 2 from Caenorhabditis briggsae.